The sequence spans 275 residues: NH(3)-dependent NAD(+) synthetase (275 aa).

Residue 46–53 (GISGGQDS) participates in ATP binding. D52 is a binding site for Mg(2+). R140 provides a ligand contact to deamido-NAD(+). Position 160 (T160) interacts with ATP. Mg(2+) is bound at residue E165. Residues K173 and D180 each coordinate deamido-NAD(+). ATP contacts are provided by K189 and T211. 260 to 261 (HK) is a binding site for deamido-NAD(+).

This sequence belongs to the NAD synthetase family. In terms of assembly, homodimer.

It catalyses the reaction deamido-NAD(+) + NH4(+) + ATP = AMP + diphosphate + NAD(+) + H(+). It functions in the pathway cofactor biosynthesis; NAD(+) biosynthesis; NAD(+) from deamido-NAD(+) (ammonia route): step 1/1. Catalyzes the ATP-dependent amidation of deamido-NAD to form NAD. Uses ammonia as a nitrogen source. The sequence is that of NH(3)-dependent NAD(+) synthetase from Salmonella dublin (strain CT_02021853).